Here is a 295-residue protein sequence, read N- to C-terminus: Pyridoxal 5'-phosphate synthase subunit PdxS (295 aa).

Asp-25 is a binding site for D-ribose 5-phosphate. The Schiff-base intermediate with D-ribose 5-phosphate role is filled by Lys-82. Gly-154 contacts D-ribose 5-phosphate. Arg-166 provides a ligand contact to D-glyceraldehyde 3-phosphate. D-ribose 5-phosphate-binding positions include Gly-215 and 236 to 237 (GS).

It belongs to the PdxS/SNZ family. As to quaternary structure, in the presence of PdxT, forms a dodecamer of heterodimers.

It catalyses the reaction aldehydo-D-ribose 5-phosphate + D-glyceraldehyde 3-phosphate + L-glutamine = pyridoxal 5'-phosphate + L-glutamate + phosphate + 3 H2O + H(+). Its pathway is cofactor biosynthesis; pyridoxal 5'-phosphate biosynthesis. Catalyzes the formation of pyridoxal 5'-phosphate from ribose 5-phosphate (RBP), glyceraldehyde 3-phosphate (G3P) and ammonia. The ammonia is provided by the PdxT subunit. Can also use ribulose 5-phosphate and dihydroxyacetone phosphate as substrates, resulting from enzyme-catalyzed isomerization of RBP and G3P, respectively. The sequence is that of Pyridoxal 5'-phosphate synthase subunit PdxS from Bacillus cereus (strain G9842).